We begin with the raw amino-acid sequence, 162 residues long: Transcription antitermination protein NusB (162 aa).

The protein belongs to the NusB family.

Involved in transcription antitermination. Required for transcription of ribosomal RNA (rRNA) genes. Binds specifically to the boxA antiterminator sequence of the ribosomal RNA (rrn) operons. In Mycobacterium sp. (strain JLS), this protein is Transcription antitermination protein NusB.